The primary structure comprises 211 residues: FMN-dependent NADH:quinone oxidoreductase (211 aa).

FMN is bound by residues Ser-17 to Ser-19, Met-102 to Leu-105, and Ser-146 to Gly-149.

It belongs to the azoreductase type 1 family. Homodimer. It depends on FMN as a cofactor.

It catalyses the reaction 2 a quinone + NADH + H(+) = 2 a 1,4-benzosemiquinone + NAD(+). The catalysed reaction is N,N-dimethyl-1,4-phenylenediamine + anthranilate + 2 NAD(+) = 2-(4-dimethylaminophenyl)diazenylbenzoate + 2 NADH + 2 H(+). Quinone reductase that provides resistance to thiol-specific stress caused by electrophilic quinones. Its function is as follows. Also exhibits azoreductase activity. Catalyzes the reductive cleavage of the azo bond in aromatic azo compounds to the corresponding amines. This is FMN-dependent NADH:quinone oxidoreductase from Macrococcus caseolyticus (strain JCSC5402) (Macrococcoides caseolyticum).